A 94-amino-acid polypeptide reads, in one-letter code: Trp operon repressor homolog (94 aa).

Residues 58-81 mediate DNA binding; sequence QREIAEKYGVSIAQITRGSNALKG.

The protein belongs to the TrpR family. In terms of assembly, homodimer.

It localises to the cytoplasm. Functionally, this protein is an aporepressor. When complexed with L-tryptophan it binds the operator region of the trp operon and prevents the initiation of transcription. This chain is Trp operon repressor homolog, found in Chlamydia trachomatis serovar L2 (strain ATCC VR-902B / DSM 19102 / 434/Bu).